The primary structure comprises 162 residues: Succinate dehydrogenase assembly factor 2, mitochondrial (162 aa).

A mitochondrion-targeting transit peptide spans 1–35 (MHNMFPALTKTLSLQGYKIINSQTGSAAWSCGRRW).

It belongs to the SDHAF2 family. Interacts with SDH1 within the SDH catalytic dimer.

It localises to the mitochondrion matrix. In terms of biological role, plays an essential role in the assembly of succinate dehydrogenase (SDH), an enzyme complex (also referred to as respiratory complex II) that is a component of both the tricarboxylic acid (TCA) cycle and the mitochondrial electron transport chain, and which couples the oxidation of succinate to fumarate with the reduction of ubiquinone (coenzyme Q) to ubiquinol. Required for flavinylation (covalent attachment of FAD) of the flavoprotein subunit SDH1 of the SDH catalytic dimer. It is unclear whether it participates in the chemistry of FAD attachment (enzymatic function) or acts as a chaperone that maintains SDH1 in a conformation that is susceptible to autocatalytic FAD attachment. Does not bind FAD or FADH(2) in vitro. Involved in sporulation. Required for the full activation of the early meiotic inducer IME1. The sequence is that of Succinate dehydrogenase assembly factor 2, mitochondrial from Saccharomyces cerevisiae (strain ATCC 204508 / S288c) (Baker's yeast).